We begin with the raw amino-acid sequence, 369 residues long: Anhydro-N-acetylmuramic acid kinase (369 aa).

12–19 (GTSMDGVD) lines the ATP pocket.

Belongs to the anhydro-N-acetylmuramic acid kinase family.

It catalyses the reaction 1,6-anhydro-N-acetyl-beta-muramate + ATP + H2O = N-acetyl-D-muramate 6-phosphate + ADP + H(+). The protein operates within amino-sugar metabolism; 1,6-anhydro-N-acetylmuramate degradation. It functions in the pathway cell wall biogenesis; peptidoglycan recycling. Its function is as follows. Catalyzes the specific phosphorylation of 1,6-anhydro-N-acetylmuramic acid (anhMurNAc) with the simultaneous cleavage of the 1,6-anhydro ring, generating MurNAc-6-P. Is required for the utilization of anhMurNAc either imported from the medium or derived from its own cell wall murein, and thus plays a role in cell wall recycling. This is Anhydro-N-acetylmuramic acid kinase from Shewanella woodyi (strain ATCC 51908 / MS32).